The primary structure comprises 264 residues: Acyl-[acyl-carrier-protein]--UDP-N-acetylglucosamine O-acyltransferase (264 aa).

This sequence belongs to the transferase hexapeptide repeat family. LpxA subfamily. In terms of assembly, homotrimer.

It is found in the cytoplasm. The enzyme catalyses a (3R)-hydroxyacyl-[ACP] + UDP-N-acetyl-alpha-D-glucosamine = a UDP-3-O-[(3R)-3-hydroxyacyl]-N-acetyl-alpha-D-glucosamine + holo-[ACP]. The protein operates within glycolipid biosynthesis; lipid IV(A) biosynthesis; lipid IV(A) from (3R)-3-hydroxytetradecanoyl-[acyl-carrier-protein] and UDP-N-acetyl-alpha-D-glucosamine: step 1/6. Functionally, involved in the biosynthesis of lipid A, a phosphorylated glycolipid that anchors the lipopolysaccharide to the outer membrane of the cell. In Chlorobaculum tepidum (strain ATCC 49652 / DSM 12025 / NBRC 103806 / TLS) (Chlorobium tepidum), this protein is Acyl-[acyl-carrier-protein]--UDP-N-acetylglucosamine O-acyltransferase.